Here is a 707-residue protein sequence, read N- to C-terminus: Glucose starvation modulator protein 1 (707 aa).

A DNA-binding region (zn(2)-C6 fungal-type) is located at residues 20-48; it reads CTFCHQKHLQCSNERPCKNCVKRNIADQC. Disordered stretches follow at residues 63-122, 154-188, 260-283, and 385-404; these read NSKA…PNDL, QPTH…PPES, DQQQ…GPSH, and NVSS…SAIA. Low complexity-rich tracts occupy residues 66–79 and 91–104; these read AVAA…TTTT and SPSI…ISPI. Composition is skewed to polar residues over residues 105–114 and 154–172; these read NTSTFDTNGH and QPTH…QVQP. Residues 178–188 show a composition bias toward low complexity; that stretch reads SSVPPSAPPES. Over residues 260–274 the composition is skewed to polar residues; sequence DQQQSSSEATGTSAS. Residues 522–591 enclose the PAS domain; the sequence is DYEKLSQLNS…FQLFKSVAVG (70 aa). The segment covering 621 to 652 has biased composition (low complexity); the sequence is NYNNNYNHNYSHNNNNNNNSNNSNNNGMSTGA. The disordered stretch occupies residues 621-659; it reads NYNNNYNHNYSHNNNNNNNSNNSNNNGMSTGAGNSGDGD.

Belongs to the ERT1/acuK family.

The protein localises to the nucleus. In terms of biological role, transcription factor which regulates nonfermentable carbon utilization. This Lodderomyces elongisporus (strain ATCC 11503 / CBS 2605 / JCM 1781 / NBRC 1676 / NRRL YB-4239) (Yeast) protein is Glucose starvation modulator protein 1 (GSM1).